A 264-amino-acid polypeptide reads, in one-letter code: Putative hydro-lyase RBAM_004300 (264 aa).

It belongs to the D-glutamate cyclase family.

This is Putative hydro-lyase RBAM_004300 from Bacillus velezensis (strain DSM 23117 / BGSC 10A6 / LMG 26770 / FZB42) (Bacillus amyloliquefaciens subsp. plantarum).